Reading from the N-terminus, the 183-residue chain is UPF0316 protein GTNG_0803 (183 aa).

Transmembrane regions (helical) follow at residues 5–25 (IVLV…RTIF), 33–53 (LAAF…SIVF), and 59–79 (YIVM…LEDI).

Belongs to the UPF0316 family.

It is found in the cell membrane. The chain is UPF0316 protein GTNG_0803 from Geobacillus thermodenitrificans (strain NG80-2).